A 199-amino-acid polypeptide reads, in one-letter code: Holliday junction branch migration complex subunit RuvA (199 aa).

Residues 1–64 (MIALLTGKLA…EDAINLYGFR (64 aa)) form a domain I region. The interval 65–143 (TQQEKELFQL…KLGLAQPQAG (79 aa)) is domain II. Positions 144-148 (GTTAP) are flexible linker. A domain III region spans residues 149 to 199 (AKQEIRDDVLSALINLGYKEAVVQKALAELKVTEDATVELVLKQALKILMK).

Belongs to the RuvA family. As to quaternary structure, homotetramer. Forms an RuvA(8)-RuvB(12)-Holliday junction (HJ) complex. HJ DNA is sandwiched between 2 RuvA tetramers; dsDNA enters through RuvA and exits via RuvB. An RuvB hexamer assembles on each DNA strand where it exits the tetramer. Each RuvB hexamer is contacted by two RuvA subunits (via domain III) on 2 adjacent RuvB subunits; this complex drives branch migration. In the full resolvosome a probable DNA-RuvA(4)-RuvB(12)-RuvC(2) complex forms which resolves the HJ.

The protein localises to the cytoplasm. In terms of biological role, the RuvA-RuvB-RuvC complex processes Holliday junction (HJ) DNA during genetic recombination and DNA repair, while the RuvA-RuvB complex plays an important role in the rescue of blocked DNA replication forks via replication fork reversal (RFR). RuvA specifically binds to HJ cruciform DNA, conferring on it an open structure. The RuvB hexamer acts as an ATP-dependent pump, pulling dsDNA into and through the RuvAB complex. HJ branch migration allows RuvC to scan DNA until it finds its consensus sequence, where it cleaves and resolves the cruciform DNA. This is Holliday junction branch migration complex subunit RuvA from Citrifermentans bemidjiense (strain ATCC BAA-1014 / DSM 16622 / JCM 12645 / Bem) (Geobacter bemidjiensis).